A 337-amino-acid polypeptide reads, in one-letter code: Holliday junction branch migration complex subunit RuvB (337 aa).

Residues 4-184 are large ATPase domain (RuvB-L); the sequence is ADRLIEPIAS…FGIVQRLEFY (181 aa). Residues Ile-23, Arg-24, Gly-65, Lys-68, Thr-69, Thr-70, 131–133, Arg-174, Tyr-184, and Arg-221 contribute to the ATP site; that span reads EDY. Residue Thr-69 participates in Mg(2+) binding. Residues 185-255 are small ATPAse domain (RuvB-S); the sequence is NVADLSTIVS…TAAAALDMLE (71 aa). Residues 258–337 form a head domain (RuvB-H) region; sequence SEGFDIMDRK…FGITKDQTKD (80 aa). DNA contacts are provided by Arg-294, Arg-313, and Arg-318.

This sequence belongs to the RuvB family. Homohexamer. Forms an RuvA(8)-RuvB(12)-Holliday junction (HJ) complex. HJ DNA is sandwiched between 2 RuvA tetramers; dsDNA enters through RuvA and exits via RuvB. An RuvB hexamer assembles on each DNA strand where it exits the tetramer. Each RuvB hexamer is contacted by two RuvA subunits (via domain III) on 2 adjacent RuvB subunits; this complex drives branch migration. In the full resolvosome a probable DNA-RuvA(4)-RuvB(12)-RuvC(2) complex forms which resolves the HJ.

It is found in the cytoplasm. It catalyses the reaction ATP + H2O = ADP + phosphate + H(+). The RuvA-RuvB-RuvC complex processes Holliday junction (HJ) DNA during genetic recombination and DNA repair, while the RuvA-RuvB complex plays an important role in the rescue of blocked DNA replication forks via replication fork reversal (RFR). RuvA specifically binds to HJ cruciform DNA, conferring on it an open structure. The RuvB hexamer acts as an ATP-dependent pump, pulling dsDNA into and through the RuvAB complex. RuvB forms 2 homohexamers on either side of HJ DNA bound by 1 or 2 RuvA tetramers; 4 subunits per hexamer contact DNA at a time. Coordinated motions by a converter formed by DNA-disengaged RuvB subunits stimulates ATP hydrolysis and nucleotide exchange. Immobilization of the converter enables RuvB to convert the ATP-contained energy into a lever motion, pulling 2 nucleotides of DNA out of the RuvA tetramer per ATP hydrolyzed, thus driving DNA branch migration. The RuvB motors rotate together with the DNA substrate, which together with the progressing nucleotide cycle form the mechanistic basis for DNA recombination by continuous HJ branch migration. Branch migration allows RuvC to scan DNA until it finds its consensus sequence, where it cleaves and resolves cruciform DNA. The sequence is that of Holliday junction branch migration complex subunit RuvB from Colwellia psychrerythraea (strain 34H / ATCC BAA-681) (Vibrio psychroerythus).